Here is a 122-residue protein sequence, read N- to C-terminus: Holo-[acyl-carrier-protein] synthase (122 aa).

Residues aspartate 8 and glutamate 57 each contribute to the Mg(2+) site.

It belongs to the P-Pant transferase superfamily. AcpS family. The cofactor is Mg(2+).

Its subcellular location is the cytoplasm. It carries out the reaction apo-[ACP] + CoA = holo-[ACP] + adenosine 3',5'-bisphosphate + H(+). Its function is as follows. Transfers the 4'-phosphopantetheine moiety from coenzyme A to a Ser of acyl-carrier-protein. The sequence is that of Holo-[acyl-carrier-protein] synthase from Protochlamydia amoebophila (strain UWE25).